Here is a 264-residue protein sequence, read N- to C-terminus: 3-methyl-2-oxobutanoate hydroxymethyltransferase (264 aa).

The Mg(2+) site is built by D45 and D84. 3-methyl-2-oxobutanoate-binding positions include 45–46 (DS), D84, and K112. E114 provides a ligand contact to Mg(2+). The active-site Proton acceptor is E181.

Belongs to the PanB family. As to quaternary structure, homodecamer; pentamer of dimers. Requires Mg(2+) as cofactor.

Its subcellular location is the cytoplasm. The enzyme catalyses 3-methyl-2-oxobutanoate + (6R)-5,10-methylene-5,6,7,8-tetrahydrofolate + H2O = 2-dehydropantoate + (6S)-5,6,7,8-tetrahydrofolate. The protein operates within cofactor biosynthesis; (R)-pantothenate biosynthesis; (R)-pantoate from 3-methyl-2-oxobutanoate: step 1/2. Its function is as follows. Catalyzes the reversible reaction in which hydroxymethyl group from 5,10-methylenetetrahydrofolate is transferred onto alpha-ketoisovalerate to form ketopantoate. This is 3-methyl-2-oxobutanoate hydroxymethyltransferase from Escherichia coli O7:K1 (strain IAI39 / ExPEC).